A 103-amino-acid polypeptide reads, in one-letter code: Small ribosomal subunit protein uS10 (103 aa).

Belongs to the universal ribosomal protein uS10 family. Part of the 30S ribosomal subunit.

Involved in the binding of tRNA to the ribosomes. The protein is Small ribosomal subunit protein uS10 of Stenotrophomonas maltophilia (strain R551-3).